We begin with the raw amino-acid sequence, 293 residues long: Protein orai (293 aa).

Residues 1–122 (MPRSHDPSRV…RAQLKASSRT (122 aa)) are Cytoplasmic-facing. The tract at residues 62–81 (STAGGGSRNGVGSKEGSVTS) is disordered. The chain crosses the membrane as a helical span at residues 123–141 (SALLAGFAMVCLVELQYDQ). Over 142-146 (STPKP) the chain is Extracellular. Residues 147–167 (LLIVLGVVTSLLVSVHLLALM) traverse the membrane as a helical segment. The Cytoplasmic portion of the chain corresponds to 168 to 198 (MSTCILPYMEATGCTQDSPHIKLKFYIDLSW). A helical membrane pass occupies residues 199–219 (LFSTCIGLLLFLVEIGVIFYV). Over 220-230 (KFTAVGYPTAG) the chain is Extracellular. A helical transmembrane segment spans residues 231 to 251 (YITTAMLVPVGVVFVVFSYLI). The Cytoplasmic portion of the chain corresponds to 252–293 (HKNRVSHSLGRFKHKVDTMKQFLDVEANLQKSTLAPSTIRDI).

The protein belongs to the Orai family. As to expression, expressed in gonad sheath cells, hypodermis, intestine and spermatheca. Coexpressed with stim-1.

Its subcellular location is the membrane. Ca(2+) release-activated Ca(2+)-like (CRAC-like) channel subunit which mediates Ca(2+) influx and increase in Ca(2+)-selective current by synergy with the Ca(2+) sensor, stim-1. Required for Ca(2+) and IP3-dependent contractile activity of sheath cells and the spermatheca. Affects brood size and somatic cell function. In Caenorhabditis elegans, this protein is Protein orai (orai-1).